Consider the following 250-residue polypeptide: uncharacterized protein (250 aa).

Residues serine 15, leucine 17, aspartate 36, aspartate 56, valine 57, and cysteine 82 each coordinate NAD(+). Serine 143 is a substrate binding site. NAD(+) is bound by residues tyrosine 156, lysine 160, phenylalanine 189, and threonine 191. Tyrosine 156 (proton acceptor) is an active-site residue.

It belongs to the short-chain dehydrogenases/reductases (SDR) family.

This is an uncharacterized protein from Mycobacterium tuberculosis (strain CDC 1551 / Oshkosh).